The primary structure comprises 208 residues: Small ribosomal subunit protein uS4 (208 aa).

The S4 RNA-binding domain maps to 98 to 158 (RRLDNIVYRL…EKSRKVASIN (61 aa)).

The protein belongs to the universal ribosomal protein uS4 family. As to quaternary structure, part of the 30S ribosomal subunit. Contacts protein S5. The interaction surface between S4 and S5 is involved in control of translational fidelity.

One of the primary rRNA binding proteins, it binds directly to 16S rRNA where it nucleates assembly of the body of the 30S subunit. In terms of biological role, with S5 and S12 plays an important role in translational accuracy. The sequence is that of Small ribosomal subunit protein uS4 from Geotalea daltonii (strain DSM 22248 / JCM 15807 / FRC-32) (Geobacter daltonii).